Consider the following 1019-residue polypeptide: Pleckstrin homology domain-containing family M member 2 (1019 aa).

Residue Met1 is modified to N-acetylmethionine. Positions 1 to 310 (MEPGEVKDRI…LDPPDACTEL (310 aa)) are interaction with KIF5B. The 123-residue stretch at 36–158 (RNHDKVLQRL…IRFELDLDAP (123 aa)) folds into the RUN domain. Disordered stretches follow at residues 230 to 458 (SVPS…SEGL), 471 to 525 (SPST…REAQ), and 557 to 581 (QPSP…SEMV). Polar residues-rich tracts occupy residues 243–272 (DTVS…QNPF) and 279–291 (TVSS…VHTT). The segment covering 315-327 (VTKKKKIGKKKKS) has biased composition (basic residues). Positions 417-427 (LNGQLDPSTWC) are enriched in polar residues. Ser441 carries the phosphoserine modification. Over residues 516–525 (PLEDTTREAQ) the composition is skewed to basic and acidic residues. Residues 762–885 (PCHCSPPEGT…VIPQGVAPSP (124 aa)) are interaction with sifA. A PH domain is found at 771–873 (TITKEGMLHY…WMQHLCQAVS (103 aa)).

Interacts with KLC2 (via TPR repeats). Interacts with KIF5B. Interacts with BORCS5. Interacts (via RUN domain) with ARL8B (GTP-bound form); PLEKHM1 and PLEKHM2 compete for interaction with ARL8B. Interacts with ARL8A. As to quaternary structure, (Microbial infection) Interacts with the S.typhimurium sifA protein; required for S.typhimurium infection.

It localises to the cytoplasm. It is found in the lysosome membrane. Its function is as follows. Plays a role in lysosomes movement and localization at the cell periphery acting as an effector of ARL8B. Required for ARL8B to exert its effects on lysosome location, recruits kinesin-1 to lysosomes and hence direct their movement toward microtubule plus ends. Binding to ARL8B provides a link from lysosomal membranes to plus-end-directed motility. Critical factor involved in NK cell-mediated cytotoxicity. Drives the polarization of cytolytic granules and microtubule-organizing centers (MTOCs) toward the immune synapse between effector NK lymphocytes and target cells. Required for maintenance of the Golgi apparatus organization. May play a role in membrane tubulation. The polypeptide is Pleckstrin homology domain-containing family M member 2 (Homo sapiens (Human)).